The sequence spans 230 residues: Pyridoxine/pyridoxamine 5'-phosphate oxidase (230 aa).

Residues 21-24 (RVEY) and lysine 87 each bind substrate. Residues 82 to 87 (RSVLCK), 97 to 98 (YT), lysine 104, and glutamine 126 each bind FMN. Substrate is bound by residues tyrosine 144, arginine 148, and serine 152. FMN contacts are provided by residues 161–162 (QS) and tryptophan 207. 213–215 (RVH) is a binding site for substrate. Residue arginine 217 participates in FMN binding.

Belongs to the pyridoxamine 5'-phosphate oxidase family. In terms of assembly, homodimer. Requires FMN as cofactor.

The enzyme catalyses pyridoxamine 5'-phosphate + O2 + H2O = pyridoxal 5'-phosphate + H2O2 + NH4(+). The catalysed reaction is pyridoxine 5'-phosphate + O2 = pyridoxal 5'-phosphate + H2O2. Its pathway is cofactor metabolism; pyridoxal 5'-phosphate salvage; pyridoxal 5'-phosphate from pyridoxamine 5'-phosphate: step 1/1. It participates in cofactor metabolism; pyridoxal 5'-phosphate salvage; pyridoxal 5'-phosphate from pyridoxine 5'-phosphate: step 1/1. Its function is as follows. Catalyzes the oxidation of either pyridoxine 5'-phosphate (PNP) or pyridoxamine 5'-phosphate (PMP) into pyridoxal 5'-phosphate (PLP). The polypeptide is Pyridoxine/pyridoxamine 5'-phosphate oxidase (Mycolicibacterium smegmatis (strain ATCC 700084 / mc(2)155) (Mycobacterium smegmatis)).